The sequence spans 723 residues: ATP-dependent DNA helicase RRM3 (723 aa).

Disordered regions lie at residues 1-31 and 61-101; these read MFRS…SGSH and DLES…DDDP. S64 carries the phosphoserine modification. The segment covering 83-96 has biased composition (low complexity); that stretch reads NNSSSLFSQSQGSF. ATP is bound at residue 254–261; that stretch reads GSAGTGKS. The DNA-binding element occupies 682-701; sequence QVYVALSRAVTMDTLQVLNF.

Belongs to the helicase family. As to quaternary structure, interacts with DEF1 and POL30.

Its subcellular location is the nucleus. The protein localises to the chromosome. It is found in the telomere. The catalysed reaction is Couples ATP hydrolysis with the unwinding of duplex DNA at the replication fork by translocating in the 5'-3' direction. This creates two antiparallel DNA single strands (ssDNA). The leading ssDNA polymer is the template for DNA polymerase III holoenzyme which synthesizes a continuous strand.. The enzyme catalyses ATP + H2O = ADP + phosphate + H(+). Its function is as follows. 5' to 3' DNA replicative helicase recruited to paused replisomes to promote fork progression throughout nonhistone protein-DNA complexes, naturally occurring impediments that are encountered in each S phase where replication forks pauses. Needed for normal fork progression through over 1000 discrete sites scattered throughout the genome, like rDNA, tRNA genes, centromeres, active replication origins, or transcriptional silencers. Required for timely replication of the telomere and subtelomeric DNA and for wild-type levels of telomeric silencing. Involved in regulation of Ty1 transposition and protects the genome from instability at nascent sites of retrotransposition. Involved in DNA repair during stalled replication fork, regulation of fragile sites expression and essential for genome stability. Also plays a role in mtDNA replication. Has G-quadruplex (G4) unwinding activity and can suppress G4-induced genome instability when PIF1 levels are low. The protein is ATP-dependent DNA helicase RRM3 of Saccharomyces cerevisiae (strain ATCC 204508 / S288c) (Baker's yeast).